The sequence spans 446 residues: Calcium-binding and coiled-coil domain-containing protein 2 (446 aa).

Positions 133–136 (ILVV) match the CLIR motif. Residues 137–349 (TTQGEVEEIE…RENSRLLSYM (213 aa)) are a coiled coil. The LIR-like motif lies at 203–206 (DYWE). Residues 362–390 (TSDEGGARQNPGLAYGNPYSGIQESSSPS) form a disordered region. Residues 371 to 381 (NPGLAYGNPYS) are interaction with LGALS8. Positions 381-390 (SGIQESSSPS) are enriched in polar residues. The interval 395–446 (KKCPICKADDICDHTLEQQQMQPLCFNCPICDKIFPATEKQIFEDHVFCHSL) is interaction with MYO6. Residues 419–444 (CFNCPICDKIFPATEKQIFEDHVFCH) form a UBZ1-type zinc finger. Residues C422, C425, H440, and H444 each contribute to the Zn(2+) site. Position 445 is a phosphoserine (S445).

The protein belongs to the CALCOCO family. In terms of assembly, dimer. Part of a complex consisting of CALCOCO2, TAX1BP1 and MYO6. Interacts with MYO6. Interacts with GEMIN4. Interacts with ATG8 family members MAP1LC3A, MAP1LC3B, GABARAP, GABARAPL1 and GABARAPL2. Interacts with ATG8 family member MAP1LC3C. Interacts with LGALS8. Interacts with TOM1; the interaction is indirect and is mediated by MYO6, which acts as a bridge between TOM1 and CALCOCO2. Interacts with AZI2. As to quaternary structure, (Microbial infection) Interacts with Lassa virus protein Z. (Microbial infection) Interacts with Mopeia virus protein Z. In terms of processing, (Microbial infection) Cleaved by S.pyogenes SpeB protease; leading to its degradation. Degradation by SpeB prevents autophagy, promoting to S.pyogenes intracellular replication. In terms of tissue distribution, expressed in all tissues tested with highest expression in skeletal muscle and lowest in brain.

It is found in the cytoplasm. Its subcellular location is the perinuclear region. It localises to the cytoskeleton. The protein resides in the cytoplasmic vesicle. The protein localises to the autophagosome membrane. Functionally, xenophagy-specific receptor required for autophagy-mediated intracellular bacteria degradation. Acts as an effector protein of galectin-sensed membrane damage that restricts the proliferation of infecting pathogens such as Salmonella typhimurium upon entry into the cytosol by targeting LGALS8-associated bacteria for autophagy. Initially orchestrates bacteria targeting to autophagosomes and subsequently ensures pathogen degradation by regulating pathogen-containing autophagosome maturation. Bacteria targeting to autophagosomes relies on its interaction with MAP1LC3A, MAP1LC3B and/or GABARAPL2, whereas regulation of pathogen-containing autophagosome maturation requires the interaction with MAP3LC3C. May play a role in ruffle formation and actin cytoskeleton organization and seems to negatively regulate constitutive secretion. In Homo sapiens (Human), this protein is Calcium-binding and coiled-coil domain-containing protein 2 (CALCOCO2).